The primary structure comprises 253 residues: Ribonuclease HII (253 aa).

An RNase H type-2 domain is found at 32–223 (APVAGLDEAG…FKTSGEEDRI (192 aa)). Positions 38, 39, and 130 each coordinate a divalent metal cation.

The protein belongs to the RNase HII family. Mn(2+) is required as a cofactor. It depends on Mg(2+) as a cofactor.

The protein resides in the cytoplasm. The enzyme catalyses Endonucleolytic cleavage to 5'-phosphomonoester.. Endonuclease that specifically degrades the RNA of RNA-DNA hybrids. The protein is Ribonuclease HII of Chelativorans sp. (strain BNC1).